The sequence spans 148 residues: MASGVTVSDVCKTTYEEIKKDKKHRYVIFYIRDEKQIDVETVADRNAEYDQFLEDIQKCGPGECRYGLFDFEYMHQCQGTSESSKKQKLFLMSWCPDTAKVKKKMLYSSSFDALKKSLVGVQKYIQATDLSEASREAVEEKLRATDRQ.

One can recognise an ADF-H domain in the interval 4–143; sequence GVTVSDVCKT…SREAVEEKLR (140 aa). Residues 19-23 carry the Nuclear localization signal motif; it reads KKDKK.

It belongs to the actin-binding proteins ADF family. Post-translationally, phosphorylated in vitro by protein kinase LIMK1. Phosphorylation is required for inactivation of tsr and for cell proliferation and axon growth. Phosphorylation is negatively regulated by the panthothenate kinase fbl which catalyzes the first step in the conversion of panthothenic acid to coenzyme A. Dephosphorylated by protein phosphatase ssh which activates tsr.

The protein localises to the cytoplasm. It localises to the cytoskeleton. The protein resides in the nucleus matrix. Exhibits F-actin depolymerizing activity and regulates actin cytoskeleton dynamics. Required for cytokinesis in both mitotic and meiotic cells and for aster migration and separation. Promotes cell motility during ovary development and oogenesis. During larval development, required for the cell rearrangement needed for formation of terminal filaments which are stacks of somatic cells that are important for the initiation of ovarioles. Also required for border cell migration during oogenesis. During border cell migration, required for actin turnover and lamellipodial protrusion. Required for the establishment of planar cell polarity (PCP) where cells adopt a uniform orientation within the plane of an epithelium. During establishment of PCP, required for the redistribution of the PCP core proteins fz and stan/fmi to the proximodistal cell boundary. During pupal development, required for elongation of the retinal cell body and for rhabdomere morphogenesis. Required for mushroom body neuroblast proliferation and axon growth. Plays a role in the positive regulation of protein secretion. Plays a role in the regulation of nuclear localization of actin. Required for the maintenance of epithelial integrity by controlling cell junctions and is also necessary for cell survival and tissue growth through regulation of JNK and yki signaling. The protein is Cofilin/actin-depolymerizing factor homolog of Drosophila melanogaster (Fruit fly).